Here is a 587-residue protein sequence, read N- to C-terminus: Xyloglucan-specific endo-beta-1,4-glucanase BoGH9A (587 aa).

The N-terminal stretch at 1–19 is a signal peptide; that stretch reads MKIVRYIALFGILSGLAVA. Cysteine 20 carries the N-palmitoyl cysteine lipid modification. Cysteine 20 carries S-diacylglycerol cysteine lipidation. Aspartate 185 serves as the catalytic Nucleophile. Catalysis depends on residues histidine 511 and aspartate 553. Glutamate 562 acts as the Proton donor in catalysis.

This sequence belongs to the glycosyl hydrolase 9 (cellulase E) family.

The protein resides in the cell outer membrane. The enzyme catalyses xyloglucan + H2O = xyloglucan oligosaccharides.. It functions in the pathway glucan metabolism; xyloglucan degradation. Functionally, catalyzes endohydrolysis of 1,4-beta-D-glucosidic linkages in xyloglucan with retention of the beta-configuration of the glycosyl residues in xyloglucan degradation. Cleaves the backbone of the 3 major types of natural xyloglucans (seed galactoxyloglucan from tamarind kernel, dicot fucogalactoxyloglucan from lettuce leaves, and solanaceous arabinogalactoxyloglucan from tomato fruit), to produce xyloglucan oligosaccharides. May be superfluous in xyloglucan degradation compared to BoGH5A (AC A7LXT7), the other Xyloglucan-specific endo-beta-1,4-glucanase. This Bacteroides ovatus (strain ATCC 8483 / DSM 1896 / JCM 5824 / BCRC 10623 / CCUG 4943 / NCTC 11153) protein is Xyloglucan-specific endo-beta-1,4-glucanase BoGH9A.